Consider the following 560-residue polypeptide: Arginine--tRNA ligase (560 aa).

A 'HIGH' region motif is present at residues 121–131 (PNIAKPFSMGH).

This sequence belongs to the class-I aminoacyl-tRNA synthetase family. In terms of assembly, monomer.

It localises to the cytoplasm. The enzyme catalyses tRNA(Arg) + L-arginine + ATP = L-arginyl-tRNA(Arg) + AMP + diphosphate. This is Arginine--tRNA ligase from Exiguobacterium sibiricum (strain DSM 17290 / CCUG 55495 / CIP 109462 / JCM 13490 / 255-15).